The chain runs to 224 residues: UPF0758 protein Hhal_2301 (224 aa).

Residues 102–224 (TLSSPAQTRT…PVSLAERGVL (123 aa)) enclose the MPN domain. The Zn(2+) site is built by H173, H175, and D186. A JAMM motif motif is present at residues 173–186 (HNHPSGITEPSAAD).

It belongs to the UPF0758 family.

The chain is UPF0758 protein Hhal_2301 from Halorhodospira halophila (strain DSM 244 / SL1) (Ectothiorhodospira halophila (strain DSM 244 / SL1)).